Here is a 243-residue protein sequence, read N- to C-terminus: Ubiquinone/menaquinone biosynthesis C-methyltransferase UbiE (243 aa).

S-adenosyl-L-methionine contacts are provided by residues Thr-69, Asp-90, and 116 to 117; that span reads DA.

Belongs to the class I-like SAM-binding methyltransferase superfamily. MenG/UbiE family.

The enzyme catalyses a 2-demethylmenaquinol + S-adenosyl-L-methionine = a menaquinol + S-adenosyl-L-homocysteine + H(+). The catalysed reaction is a 2-methoxy-6-(all-trans-polyprenyl)benzene-1,4-diol + S-adenosyl-L-methionine = a 5-methoxy-2-methyl-3-(all-trans-polyprenyl)benzene-1,4-diol + S-adenosyl-L-homocysteine + H(+). It functions in the pathway quinol/quinone metabolism; menaquinone biosynthesis; menaquinol from 1,4-dihydroxy-2-naphthoate: step 2/2. Its pathway is cofactor biosynthesis; ubiquinone biosynthesis. Methyltransferase required for the conversion of demethylmenaquinol (DMKH2) to menaquinol (MKH2) and the conversion of 2-polyprenyl-6-methoxy-1,4-benzoquinol (DDMQH2) to 2-polyprenyl-3-methyl-6-methoxy-1,4-benzoquinol (DMQH2). The protein is Ubiquinone/menaquinone biosynthesis C-methyltransferase UbiE of Burkholderia mallei (strain NCTC 10247).